The chain runs to 110 residues: BET1-like protein (110 aa).

The Cytoplasmic segment spans residues 1 to 85 (MADPWNRGHG…MVRSGRDNRK (85 aa)). The t-SNARE coiled-coil homology domain occupies 14–76 (DMLDAENKRM…TGSVKRFSTM (63 aa)). Residues 86-106 (ILCYVSVGLVVAFFLLYYLVS) form a helical; Anchor for type IV membrane protein membrane-spanning segment. Over 107–110 (RMQN) the chain is Lumenal.

In terms of assembly, component of a SNARE complex consisting of stx5, ykt6, gosr2 and bet1l.

It localises to the golgi apparatus membrane. Vesicle SNARE required for targeting and fusion of retrograde transport vesicles with the Golgi complex. Required for the integrity of the Golgi complex. This Danio rerio (Zebrafish) protein is BET1-like protein (bet1l).